Reading from the N-terminus, the 547-residue chain is Cellodextrinase (547 aa).

D148 serves as the catalytic Nucleophile. Catalysis depends on residues H474, D520, and E529.

This sequence belongs to the glycosyl hydrolase 9 (cellulase E) family.

The protein resides in the secreted. The enzyme catalyses Endohydrolysis of (1-&gt;4)-beta-D-glucosidic linkages in cellulose, lichenin and cereal beta-D-glucans.. Is not inhibited by methylcellulose. Its function is as follows. Glycoside hydrolase that rapidly hydrolyzes short-chain cellodextrins to yield either cellobiose or cellobiose and glucose as end products; cellobiose is not hydrolyzed further. Also shows limited activity against endoglucanase specific substrates (carboxymethylcellulose (CMC), lichenan, laminarin and xylan). The sequence is that of Cellodextrinase from Butyrivibrio fibrisolvens.